Reading from the N-terminus, the 805-residue chain is MQFPESWLRSLVNPSIGTDELAHRLTMAGLEVEETEPAAPPFTGVVVARIVDIAPHPDADKLRVCQVDDGSGALLQIVCGAPNAAAGLTVPLARVGAELPGGMKIGVAKMRGVQSSGMLCSARELGLSQDHAGLLELPAALRPGTDIRAALDLDDTLFTLKLTPNRADCLSIFGVAREVAALTGTPLTAPAAEPVPVTIDHRLPVAIQAPDLCGRFAGRVIQGVNARAATPEWMKTRLERAGQRSVSALVDISNYVMLEVGRPSHVFDLDKIGGDLSVRWAREGETLELLNGQAVALDPKVGVVVAGEQVESLAGIMGGEATSVTLDTRNIYLEAAFWWPGAIAGRARRYKFSSEASHRFERGVDYASIPEHIELITRLILDICGGQAGPVDDQCVNLPVREPVRMRLARCHRVLGVAVERAEVAQIFTRLGLPFQEQGDDFVVTPPSYRFDIEIEEDLIEEVARVYGFERIPDVPPVARAKMHAQPEARRGAHAVRRLVAARDYQEVVNYSFVEAAWERDYAGNDNLVRLVNPIASHLSVMRSSLIAGLVAIVRHNANRKQSRVRLFELGRVFHRDPQLADGPLEVAGVRQPLMLAGVAWGGAVEEQWGVPHRQVDFYDVKQDVEALFGARADALRFVADRYPALHPGRSARIELDGQPIGWLGELHPQWTQQADLHHAPVVFELDFEALAERRLPAVRELSRQPAVVRDLALWVDAKLPAQAMLDTVAAAIARDPQLSVVQDAQVFDVWREKPVAGQTVTEKSLAFRFWLQDTEVTLDEARVADCIARIKDALVAAHNARQRA.

The tRNA-binding domain maps to 39 to 148 (APPFTGVVVA…AALRPGTDIR (110 aa)). A B5 domain is found at 399–474 (PVREPVRMRL…RVYGFERIPD (76 aa)). Aspartate 452, aspartate 458, glutamate 461, and glutamate 462 together coordinate Mg(2+). Residues 703-804 (SRQPAVVRDL…LVAAHNARQR (102 aa)) form the FDX-ACB domain.

The protein belongs to the phenylalanyl-tRNA synthetase beta subunit family. Type 1 subfamily. In terms of assembly, tetramer of two alpha and two beta subunits. It depends on Mg(2+) as a cofactor.

The protein localises to the cytoplasm. The enzyme catalyses tRNA(Phe) + L-phenylalanine + ATP = L-phenylalanyl-tRNA(Phe) + AMP + diphosphate + H(+). This is Phenylalanine--tRNA ligase beta subunit from Bordetella parapertussis (strain 12822 / ATCC BAA-587 / NCTC 13253).